Reading from the N-terminus, the 61-residue chain is UPF0434 protein Nmul_A1027 (61 aa).

The protein belongs to the UPF0434 family.

The chain is UPF0434 protein Nmul_A1027 from Nitrosospira multiformis (strain ATCC 25196 / NCIMB 11849 / C 71).